Consider the following 261-residue polypeptide: Neurexophilin-2 (261 aa).

An N-terminal signal peptide occupies residues 1–22; it reads MSLRPLPLLVVPGLLQLLFCDS. Residues 23 to 87 are II; it reads EEVIHNTESV…WDWLANITEI (65 aa). Asn-83, Asn-136, Asn-146, and Asn-152 each carry an N-linked (GlcNAc...) asparagine glycan. The tract at residues 88–166 is III; it reads QEQLARTKRR…LVPPSKVVEF (79 aa). The IV (linker domain) stretch occupies residues 167 to 175; sequence EISPQSTLE. Residues 176-261 form a v (Cys-rich) region; sequence TKESKSFNCH…HSETPYLSFG (86 aa).

The protein belongs to the neurexophilin family. May be proteolytically processed at the boundary between the N-terminal non-conserved and the central conserved domain in neuron-like cells.

Its subcellular location is the secreted. May be signaling molecules that resemble neuropeptides and that act by binding to alpha-neurexins and possibly other receptors. The sequence is that of Neurexophilin-2 (Nxph2) from Mus musculus (Mouse).